Here is a 729-residue protein sequence, read N- to C-terminus: Oligopeptide transporter 4 (729 aa).

Residue Ala2 is modified to N-acetylalanine. The residue at position 8 (Ser8) is a Phosphoserine. 16 consecutive transmembrane segments (helical) span residues 37–57, 61–81, 123–143, 148–168, 177–194, 207–227, 256–276, 279–299, 352–372, 410–430, 438–458, 522–542, 592–612, 621–637, 640–660, and 673–693; these read MWFL…FFSY, PLVI…HFLA, AFGS…AFYG, FIAG…WAGL, AHMW…FRAL, FFVI…YLFT, GLGA…SPLI, FFAI…VLPL, LSMF…STLT, WWFY…CVFL, WWGL…ISII, FLVQ…VAWW, YAAM…VWSL, WIPL…TAMM, ATAV…LFVF, and VLSA…YFSV.

Belongs to the oligopeptide OPT transporter (TC 2.A.67.1) family. Expressed in flowers, leaves, roots, and stems.

Its subcellular location is the membrane. Involved in the translocation of tetra- and pentapeptides across the cellular membrane in an energy-dependent manner. The sequence is that of Oligopeptide transporter 4 (OPT4) from Arabidopsis thaliana (Mouse-ear cress).